The following is a 142-amino-acid chain: Large ribosomal subunit protein uL13 (142 aa).

This sequence belongs to the universal ribosomal protein uL13 family. In terms of assembly, part of the 50S ribosomal subunit.

In terms of biological role, this protein is one of the early assembly proteins of the 50S ribosomal subunit, although it is not seen to bind rRNA by itself. It is important during the early stages of 50S assembly. This is Large ribosomal subunit protein uL13 from Shigella dysenteriae serotype 1 (strain Sd197).